A 341-amino-acid chain; its full sequence is Glycerol-3-phosphate dehydrogenase [NAD(P)+] (341 aa).

The NADPH site is built by Ser-15, Trp-16, Arg-36, and Lys-110. Sn-glycerol 3-phosphate is bound by residues Lys-110, Gly-139, and Ser-141. Ala-143 is a binding site for NADPH. Sn-glycerol 3-phosphate contacts are provided by Lys-194, Asp-247, Ser-257, Arg-258, and Asn-259. Catalysis depends on Lys-194, which acts as the Proton acceptor. Arg-258 contacts NADPH. NADPH-binding residues include Val-282 and Glu-284.

The protein belongs to the NAD-dependent glycerol-3-phosphate dehydrogenase family.

The protein localises to the cytoplasm. It carries out the reaction sn-glycerol 3-phosphate + NAD(+) = dihydroxyacetone phosphate + NADH + H(+). The enzyme catalyses sn-glycerol 3-phosphate + NADP(+) = dihydroxyacetone phosphate + NADPH + H(+). Its pathway is membrane lipid metabolism; glycerophospholipid metabolism. Catalyzes the reduction of the glycolytic intermediate dihydroxyacetone phosphate (DHAP) to sn-glycerol 3-phosphate (G3P), the key precursor for phospholipid synthesis. The polypeptide is Glycerol-3-phosphate dehydrogenase [NAD(P)+] (Stenotrophomonas maltophilia (strain R551-3)).